Reading from the N-terminus, the 308-residue chain is Folate transporter 1, chloroplastic (308 aa).

Solcar repeat units follow at residues 4–94 (SWQW…AKQR), 104–192 (LSPA…LRKI), and 213–299 (ADYA…VLKL). Transmembrane regions (helical) follow at residues 10 to 30 (ATAGAVAGFATVAAMHSLDVV), 74 to 91 (VIGSTVSWGLYFFFYGRA), 110 to 130 (LASAAEAGALVCLCTNPIWLV), 164 to 184 (ALYKGIVPGLVLVSHGAIQFT), 216 to 236 (AALGGSSKVAAVLLTYPFQVI), and 274 to 293 (GLTANLLKNVPASSITFIVY).

This sequence belongs to the mitochondrial carrier (TC 2.A.29) family. Ubiquitous.

It is found in the plastid. It localises to the chloroplast membrane. Mediates folate import into chloroplast. The chain is Folate transporter 1, chloroplastic (FOLT1) from Arabidopsis thaliana (Mouse-ear cress).